The primary structure comprises 309 residues: Solute carrier family 25 member 48 (309 aa).

Solcar repeat units lie at residues 3–86 (VFQL…TQRL), 99–209 (CSML…FCNW), and 218–305 (PPPC…SLQF). A run of 6 helical transmembrane segments spans residues 9 to 29 (FLAGWIGGASSVIVGHPLDTV), 61 to 81 (GLSFPLASITLYNSMVFGFFS), 105 to 125 (TVASMLTGLVSVGVGAPVDLV), 186 to 206 (GAMILRDIPGYALYFIPYTLF), 218 to 238 (PPPCCIWLAGGLAGSISWVTA), and 281 to 299 (ATVNAIRGFPMCATMFLGY).

The protein belongs to the mitochondrial carrier (TC 2.A.29) family.

It localises to the mitochondrion inner membrane. The polypeptide is Solute carrier family 25 member 48 (slc25a48) (Danio rerio (Zebrafish)).